Reading from the N-terminus, the 603-residue chain is Aspartate--tRNA(Asp/Asn) ligase (603 aa).

Residues 205 to 208 (QLFK) form an aspartate region. Arginine 227 provides a ligand contact to L-aspartate. Residues 227-229 (RDE) and glutamine 236 each bind ATP. Histidine 463 contacts L-aspartate. Glutamate 497 provides a ligand contact to ATP. Arginine 504 provides a ligand contact to L-aspartate. 549 to 552 (GMDR) is an ATP binding site.

This sequence belongs to the class-II aminoacyl-tRNA synthetase family. Type 1 subfamily. In terms of assembly, homodimer.

The protein localises to the cytoplasm. The catalysed reaction is tRNA(Asx) + L-aspartate + ATP = L-aspartyl-tRNA(Asx) + AMP + diphosphate. In terms of biological role, aspartyl-tRNA synthetase with relaxed tRNA specificity since it is able to aspartylate not only its cognate tRNA(Asp) but also tRNA(Asn). Reaction proceeds in two steps: L-aspartate is first activated by ATP to form Asp-AMP and then transferred to the acceptor end of tRNA(Asp/Asn). The chain is Aspartate--tRNA(Asp/Asn) ligase from Anaeromyxobacter dehalogenans (strain 2CP-C).